A 318-amino-acid polypeptide reads, in one-letter code: Glycine--tRNA ligase alpha subunit (318 aa).

This sequence belongs to the class-II aminoacyl-tRNA synthetase family. As to quaternary structure, tetramer of two alpha and two beta subunits.

The protein resides in the cytoplasm. The enzyme catalyses tRNA(Gly) + glycine + ATP = glycyl-tRNA(Gly) + AMP + diphosphate. This chain is Glycine--tRNA ligase alpha subunit (glyQ), found in Moraxella catarrhalis (Branhamella catarrhalis).